The primary structure comprises 142 residues: Organic hydroperoxide resistance protein-like 2 (142 aa).

This sequence belongs to the OsmC/Ohr family.

This Staphylococcus saprophyticus subsp. saprophyticus (strain ATCC 15305 / DSM 20229 / NCIMB 8711 / NCTC 7292 / S-41) protein is Organic hydroperoxide resistance protein-like 2.